Consider the following 649-residue polypeptide: Exoribonuclease 2 (649 aa).

Positions 190–517 constitute an RNB domain; it reads RKDLTDLDFI…NHRLLKSIIK (328 aa). Residues 562–644 enclose the S1 motif domain; the sequence is NQKFNAEITD…KTRSIIAKPV (83 aa).

This sequence belongs to the RNR ribonuclease family. RNase II subfamily.

The protein localises to the cytoplasm. The enzyme catalyses Exonucleolytic cleavage in the 3'- to 5'-direction to yield nucleoside 5'-phosphates.. Involved in mRNA degradation. Hydrolyzes single-stranded polyribonucleotides processively in the 3' to 5' direction. The polypeptide is Exoribonuclease 2 (Buchnera aphidicola subsp. Acyrthosiphon pisum (strain 5A)).